The following is a 196-amino-acid chain: Imidazoleglycerol-phosphate dehydratase (196 aa).

Belongs to the imidazoleglycerol-phosphate dehydratase family.

The protein localises to the cytoplasm. It carries out the reaction D-erythro-1-(imidazol-4-yl)glycerol 3-phosphate = 3-(imidazol-4-yl)-2-oxopropyl phosphate + H2O. It functions in the pathway amino-acid biosynthesis; L-histidine biosynthesis; L-histidine from 5-phospho-alpha-D-ribose 1-diphosphate: step 6/9. This Zymomonas mobilis subsp. mobilis (strain ATCC 31821 / ZM4 / CP4) protein is Imidazoleglycerol-phosphate dehydratase.